The chain runs to 167 residues: Mediator of RNA polymerase II transcription subunit 10 (167 aa).

Residues 141 to 158 (TGGRTVGGEGEGAGQGEG) are compositionally biased toward gly residues. The tract at residues 141 to 167 (TGGRTVGGEGEGAGQGEGGEGRGEGGN) is disordered.

It belongs to the Mediator complex subunit 10 family. In terms of assembly, component of the Mediator complex.

The protein localises to the nucleus. Functionally, component of the Mediator complex, a coactivator involved in the regulated transcription of nearly all RNA polymerase II-dependent genes. Mediator functions as a bridge to convey information from gene-specific regulatory proteins to the basal RNA polymerase II transcription machinery. Mediator is recruited to promoters by direct interactions with regulatory proteins and serves as a scaffold for the assembly of a functional preinitiation complex with RNA polymerase II and the general transcription factors. In Chaetomium globosum (strain ATCC 6205 / CBS 148.51 / DSM 1962 / NBRC 6347 / NRRL 1970) (Soil fungus), this protein is Mediator of RNA polymerase II transcription subunit 10 (NUT2).